The chain runs to 300 residues: Ribosomal protein L11 methyltransferase (300 aa).

Residues threonine 152, glycine 173, aspartate 195, and asparagine 234 each contribute to the S-adenosyl-L-methionine site.

The protein belongs to the methyltransferase superfamily. PrmA family.

It is found in the cytoplasm. It carries out the reaction L-lysyl-[protein] + 3 S-adenosyl-L-methionine = N(6),N(6),N(6)-trimethyl-L-lysyl-[protein] + 3 S-adenosyl-L-homocysteine + 3 H(+). Functionally, methylates ribosomal protein L11. The sequence is that of Ribosomal protein L11 methyltransferase from Cupriavidus necator (strain ATCC 17699 / DSM 428 / KCTC 22496 / NCIMB 10442 / H16 / Stanier 337) (Ralstonia eutropha).